We begin with the raw amino-acid sequence, 520 residues long: Ribonuclease Y (520 aa).

The helical transmembrane segment at 4–24 (VSGILLVLIGLLAGVGLGVLL) threads the bilayer. The region spanning 210 to 270 (TVSVVNLPNE…VRREVARVSL (61 aa)) is the KH domain. One can recognise an HD domain in the interval 336 to 429 (VLQHSREVAF…VQAADALSGA (94 aa)).

Belongs to the RNase Y family.

It is found in the cell membrane. Functionally, endoribonuclease that initiates mRNA decay. This chain is Ribonuclease Y, found in Syntrophobacter fumaroxidans (strain DSM 10017 / MPOB).